Reading from the N-terminus, the 122-residue chain is Ribosome-binding factor A (122 aa).

It belongs to the RbfA family. As to quaternary structure, monomer. Binds 30S ribosomal subunits, but not 50S ribosomal subunits or 70S ribosomes.

Its subcellular location is the cytoplasm. One of several proteins that assist in the late maturation steps of the functional core of the 30S ribosomal subunit. Associates with free 30S ribosomal subunits (but not with 30S subunits that are part of 70S ribosomes or polysomes). Required for efficient processing of 16S rRNA. May interact with the 5'-terminal helix region of 16S rRNA. In Albidiferax ferrireducens (strain ATCC BAA-621 / DSM 15236 / T118) (Rhodoferax ferrireducens), this protein is Ribosome-binding factor A.